A 270-amino-acid chain; its full sequence is MISITKDKRMLGYESLSSYSNISHFVTTRQGGCSEGNYASFNCTPYSGDEAEKVRRNQTLLMEGMSQIPEELVIPVQTHETNYLLIGDAYLSASSQQRQEMLHGVDALITREPGYCLCISTADCVPVLVYDKKHGAIAAIHAGWRGTVAYIVRDTLLRMEKEFGTSGEDVVACIGPSISLASFEVGEEVYEAFQKNGFDMPRISIRKEETGKHHIDLWEANRMQILAFGVPSGQVELARICTYIHHDEFFSARRLGIKSGRILSGIMIHK.

Positions 79, 124, and 141 each coordinate Zn(2+).

The protein belongs to the purine nucleoside phosphorylase YfiH/LACC1 family. Homodimer. Cu(2+) serves as cofactor. It depends on Zn(2+) as a cofactor.

The enzyme catalyses adenosine + phosphate = alpha-D-ribose 1-phosphate + adenine. It carries out the reaction S-methyl-5'-thioadenosine + phosphate = 5-(methylsulfanyl)-alpha-D-ribose 1-phosphate + adenine. The catalysed reaction is inosine + phosphate = alpha-D-ribose 1-phosphate + hypoxanthine. It catalyses the reaction adenosine + H2O + H(+) = inosine + NH4(+). Purine nucleoside enzyme that catalyzes the phosphorolysis of adenosine and inosine nucleosides, yielding D-ribose 1-phosphate and the respective free bases, adenine and hypoxanthine. Also catalyzes the phosphorolysis of S-methyl-5'-thioadenosine into adenine and S-methyl-5-thio-alpha-D-ribose 1-phosphate. Also has adenosine deaminase activity. This is Purine nucleoside phosphorylase BT_4389 from Bacteroides thetaiotaomicron (strain ATCC 29148 / DSM 2079 / JCM 5827 / CCUG 10774 / NCTC 10582 / VPI-5482 / E50).